The chain runs to 543 residues: Tyrosine-protein kinase Yes (543 aa).

Positions 1 to 20 are enriched in basic and acidic residues; the sequence is MGCIKSKENKSPAIKYRPEN. Residues 1 to 45 form a disordered region; the sequence is MGCIKSKENKSPAIKYRPENTPEPVSTSVSHYGAEPTTVSPCPSS. Gly2 carries N-myristoyl glycine lipidation. Cys3 is lipidated: S-palmitoyl cysteine; in membrane form. Thr21 carries the phosphothreonine modification. Tyr32 is subject to Phosphotyrosine. Ser40 carries the post-translational modification Phosphoserine. The SH3 domain maps to 91 to 152; sequence GGVTIFVALY…PSNYVAPADS (62 aa). The 98-residue stretch at 158-255 folds into the SH2 domain; that stretch reads WYFGKMGRKD…GLCHKLTTVC (98 aa). One can recognise a Protein kinase domain in the interval 277–530; it reads LRLEVKLGQG…YIQSFLEDYF (254 aa). ATP contacts are provided by residues 283-291 and Lys305; that span reads LGQGCFGEV. Phosphotyrosine occurs at positions 336 and 345. Asp396 (proton acceptor) is an active-site residue. Residue Tyr426 is modified to Phosphotyrosine; by autocatalysis. Tyr446 is modified (phosphotyrosine). Tyr537 bears the Phosphotyrosine; by CSK mark.

It belongs to the protein kinase superfamily. Tyr protein kinase family. SRC subfamily. In terms of assembly, interacts with YAP1 and CSF1R. Interacts with CTNND1; this interaction allows YES1-mediated activation of FYN and FER and subsequent phosphorylation of CTNND1. Interacts with FASLG. Interacts with IL6ST/gp130. Interacts with SCRIB, when YES1 is in a closed conformation; the interaction facilitates YES1 autophosphorylation. Post-translationally, phosphorylated. Phosphorylation by CSK on the C-terminal tail maintains the enzyme in an inactive state. Autophosphorylation at Tyr-426 maintains enzyme activity by blocking CSK-mediated inhibition. Palmitoylation at Cys-3 promotes membrane localization. In terms of tissue distribution, expressed in the epithelial cells of renal proximal tubules and stomach as well as hematopoietic cells in the bone marrow and spleen in the fetal tissues. In adult, expressed in epithelial cells of the renal proximal tubules and present in keratinocytes in the basal epidermal layer of epidermis.

The protein resides in the cell membrane. The protein localises to the cytoplasm. Its subcellular location is the cytoskeleton. It localises to the microtubule organizing center. It is found in the centrosome. The protein resides in the cytosol. The protein localises to the cell junction. The enzyme catalyses L-tyrosyl-[protein] + ATP = O-phospho-L-tyrosyl-[protein] + ADP + H(+). In terms of biological role, non-receptor protein tyrosine kinase that is involved in the regulation of cell growth and survival, apoptosis, cell-cell adhesion, cytoskeleton remodeling, and differentiation. Stimulation by receptor tyrosine kinases (RTKs) including EGFR, PDGFR, CSF1R and FGFR leads to recruitment of YES1 to the phosphorylated receptor, and activation and phosphorylation of downstream substrates. Upon EGFR activation, promotes the phosphorylation of PARD3 to favor epithelial tight junction assembly. Participates in the phosphorylation of specific junctional components such as CTNND1 by stimulating the FYN and FER tyrosine kinases at cell-cell contacts. Upon T-cell stimulation by CXCL12, phosphorylates collapsin response mediator protein 2/DPYSL2 and induces T-cell migration. Participates in CD95L/FASLG signaling pathway and mediates AKT-mediated cell migration. Plays a role in cell cycle progression by phosphorylating the cyclin-dependent kinase 4/CDK4 thus regulating the G1 phase. Also involved in G2/M progression and cytokinesis. Catalyzes phosphorylation of organic cation transporter OCT2 which induces its transport activity. This is Tyrosine-protein kinase Yes (YES1) from Homo sapiens (Human).